Reading from the N-terminus, the 384-residue chain is N-acetylneuraminate epimerase (384 aa).

An N-terminal signal peptide occupies residues 1 to 29 (MGMQMKNFKKMMTLMALCLSVAITTSGYA). Kelch repeat units lie at residues 51 to 95 (VIYV…VFLN), 97 to 149 (ELYV…VKLN), 151 to 184 (TMVL…KVIY), 185 to 230 (NYFN…VMEN), 233 to 282 (LMLI…LAGA), 304 to 353 (QNYT…SYGD), and 355 to 384 (VFLI…LLIK). Glutamate 239 functions as the Proton acceptor in the catalytic mechanism.

It belongs to the NanM family. As to quaternary structure, homodimer.

Its subcellular location is the periplasm. The catalysed reaction is N-acetyl-alpha-neuraminate = N-acetyl-beta-neuraminate. Functionally, converts alpha-N-acetylneuranimic acid (Neu5Ac) to the beta-anomer, accelerating the equilibrium between the alpha- and beta-anomers. Probably facilitates sialidase-negative bacteria to compete successfully for limited amounts of extracellular Neu5Ac, which is likely taken up in the beta-anomer. In addition, the rapid removal of sialic acid from solution might be advantageous to the bacterium to damp down host responses. The chain is N-acetylneuraminate epimerase from Salmonella enteritidis PT4 (strain P125109).